A 311-amino-acid chain; its full sequence is Lipoyl synthase (311 aa).

[4Fe-4S] cluster contacts are provided by C47, C52, C58, C73, C77, C80, and S286. Residues 59–276 enclose the Radical SAM core domain; it reads WSRHTATYLA…RSVGESLGLF (218 aa).

It belongs to the radical SAM superfamily. Lipoyl synthase family. [4Fe-4S] cluster serves as cofactor.

Its subcellular location is the cytoplasm. It catalyses the reaction [[Fe-S] cluster scaffold protein carrying a second [4Fe-4S](2+) cluster] + N(6)-octanoyl-L-lysyl-[protein] + 2 oxidized [2Fe-2S]-[ferredoxin] + 2 S-adenosyl-L-methionine + 4 H(+) = [[Fe-S] cluster scaffold protein] + N(6)-[(R)-dihydrolipoyl]-L-lysyl-[protein] + 4 Fe(3+) + 2 hydrogen sulfide + 2 5'-deoxyadenosine + 2 L-methionine + 2 reduced [2Fe-2S]-[ferredoxin]. Its pathway is protein modification; protein lipoylation via endogenous pathway; protein N(6)-(lipoyl)lysine from octanoyl-[acyl-carrier-protein]: step 2/2. Its function is as follows. Catalyzes the radical-mediated insertion of two sulfur atoms into the C-6 and C-8 positions of the octanoyl moiety bound to the lipoyl domains of lipoate-dependent enzymes, thereby converting the octanoylated domains into lipoylated derivatives. The protein is Lipoyl synthase of Chlamydia trachomatis serovar L2 (strain ATCC VR-902B / DSM 19102 / 434/Bu).